Here is a 351-residue protein sequence, read N- to C-terminus: Heme A synthase (351 aa).

The next 8 membrane-spanning stretches (helical) occupy residues Trp-17–Leu-37, Leu-103–Gln-123, Leu-129–Ser-149, Leu-164–Asp-184, Ala-201–Leu-221, Phe-261–Phe-281, Glu-289–Val-309, and Leu-316–Trp-336. His-263 lines the heme pocket. His-320 lines the heme pocket.

Belongs to the COX15/CtaA family. Type 2 subfamily. As to quaternary structure, interacts with CtaB. It depends on heme b as a cofactor.

The protein resides in the cell membrane. The catalysed reaction is Fe(II)-heme o + 2 A + H2O = Fe(II)-heme a + 2 AH2. The protein operates within porphyrin-containing compound metabolism; heme A biosynthesis; heme A from heme O: step 1/1. Functionally, catalyzes the conversion of heme O to heme A by two successive hydroxylations of the methyl group at C8. The first hydroxylation forms heme I, the second hydroxylation results in an unstable dihydroxymethyl group, which spontaneously dehydrates, resulting in the formyl group of heme A. This Hyphomonas neptunium (strain ATCC 15444) protein is Heme A synthase.